The primary structure comprises 129 residues: Small ribosomal subunit protein uS8c (129 aa).

Belongs to the universal ribosomal protein uS8 family. In terms of assembly, part of the 30S ribosomal subunit.

It is found in the plastid. The protein resides in the chloroplast. Its function is as follows. One of the primary rRNA binding proteins, it binds directly to 16S rRNA central domain where it helps coordinate assembly of the platform of the 30S subunit. The polypeptide is Small ribosomal subunit protein uS8c (rps8) (Nephroselmis olivacea (Green alga)).